The chain runs to 393 residues: Formate-dependent phosphoribosylglycinamide formyltransferase (393 aa).

Residues 22–23 and Glu-82 contribute to the N(1)-(5-phospho-beta-D-ribosyl)glycinamide site; that span reads EL. ATP is bound by residues Arg-114, Lys-155, 160–165, 195–198, and Glu-203; these read SSGKGQ and EGFV. Residues 119–308 form the ATP-grasp domain; the sequence is RLAAEELGLP…EFALHARAIL (190 aa). Mg(2+) is bound by residues Glu-267 and Glu-279. N(1)-(5-phospho-beta-D-ribosyl)glycinamide is bound by residues Asp-286, Lys-356, and 363-364; that span reads RR.

It belongs to the PurK/PurT family. Homodimer.

The catalysed reaction is N(1)-(5-phospho-beta-D-ribosyl)glycinamide + formate + ATP = N(2)-formyl-N(1)-(5-phospho-beta-D-ribosyl)glycinamide + ADP + phosphate + H(+). Its pathway is purine metabolism; IMP biosynthesis via de novo pathway; N(2)-formyl-N(1)-(5-phospho-D-ribosyl)glycinamide from N(1)-(5-phospho-D-ribosyl)glycinamide (formate route): step 1/1. In terms of biological role, involved in the de novo purine biosynthesis. Catalyzes the transfer of formate to 5-phospho-ribosyl-glycinamide (GAR), producing 5-phospho-ribosyl-N-formylglycinamide (FGAR). Formate is provided by PurU via hydrolysis of 10-formyl-tetrahydrofolate. The polypeptide is Formate-dependent phosphoribosylglycinamide formyltransferase (Nitratidesulfovibrio vulgaris (strain DSM 19637 / Miyazaki F) (Desulfovibrio vulgaris)).